The following is a 195-amino-acid chain: HTH-type transcriptional regulator BetI (195 aa).

The HTH tetR-type domain maps to 8–68 (SIRRRQLIDA…ATMRDITSQL (61 aa)). The H-T-H motif DNA-binding region spans 31 to 50 (TIAQIARRAGVSTGIISHYF).

It participates in amine and polyamine biosynthesis; betaine biosynthesis via choline pathway [regulation]. Its function is as follows. Repressor involved in the biosynthesis of the osmoprotectant glycine betaine. It represses transcription of the choline transporter BetT and the genes of BetAB involved in the synthesis of glycine betaine. The protein is HTH-type transcriptional regulator BetI of Escherichia coli (strain SMS-3-5 / SECEC).